A 364-amino-acid polypeptide reads, in one-letter code: Aminomethyltransferase (364 aa).

It belongs to the GcvT family. The glycine cleavage system is composed of four proteins: P, T, L and H.

It catalyses the reaction N(6)-[(R)-S(8)-aminomethyldihydrolipoyl]-L-lysyl-[protein] + (6S)-5,6,7,8-tetrahydrofolate = N(6)-[(R)-dihydrolipoyl]-L-lysyl-[protein] + (6R)-5,10-methylene-5,6,7,8-tetrahydrofolate + NH4(+). In terms of biological role, the glycine cleavage system catalyzes the degradation of glycine. The sequence is that of Aminomethyltransferase from Thermotoga maritima (strain ATCC 43589 / DSM 3109 / JCM 10099 / NBRC 100826 / MSB8).